The following is a 248-amino-acid chain: Probable transcriptional regulatory protein PSPTO_3980 (248 aa).

Belongs to the TACO1 family.

The protein localises to the cytoplasm. In Pseudomonas syringae pv. tomato (strain ATCC BAA-871 / DC3000), this protein is Probable transcriptional regulatory protein PSPTO_3980.